A 756-amino-acid polypeptide reads, in one-letter code: Cholesterol uptake protein 1 (756 aa).

The N-terminal stretch at 1–18 (MRTSQAIFILIFLDSVRN) is a signal peptide. The Extracellular segment spans residues 19-268 (QSPQVIPAKW…TIESSMKIFD (250 aa)). Asparagine 39 and asparagine 63 each carry an N-linked (GlcNAc...) asparagine glycan. A Cholesterol-binding sequence motif motif is present at residues 124 to 129 (VHYNFR). N-linked (GlcNAc...) asparagine glycosylation is found at asparagine 140, asparagine 174, and asparagine 257. Residues 269-289 (YTIPIVFWACILLLVTIVVFV) traverse the membrane as a helical segment. Topologically, residues 290 to 373 (YHYFDGIWER…YEERELKYDV (84 aa)) are cytoplasmic. The chain crosses the membrane as a helical span at residues 374 to 394 (YKIALAIIGIFYNITVLQLII). Over 395-421 (SKAGSLRQSGDLDECTFNFQCARPLWY) the chain is Extracellular. Residues 422-442 (FVAFNNVVSNGGYVYFGTLII) traverse the membrane as a helical segment. The Cytoplasmic portion of the chain corresponds to 443 to 473 (VMNYCRERSFRRLFAVQPTLAERYGLPQHSG). A helical membrane pass occupies residues 474–494 (LMTAIGLAVIMEGISSATYHV). The Extracellular portion of the chain corresponds to 495–498 (CPNN). The chain crosses the membrane as a helical span at residues 499–517 (INYQFDTALMYVIGMLGKL). Over 518–530 (KIWSLRHPDMVVS) the chain is Cytoplasmic. Residues 531-551 (AYHAFGFLGVFLMAAIAGVYV) form a helical membrane-spanning segment. The Extracellular portion of the chain corresponds to 552–554 (HNM). The chain crosses the membrane as a helical span at residues 555 to 575 (IFWALFSIIYIASMLLVSLEF). The Cholesterol-binding sequence motif signature appears at 570-578 (LVSLEFYFK). The Cytoplasmic portion of the chain corresponds to 576 to 612 (YFKGIWTLNLRELRNSIRLSWVSSRHLSCVVPAYKAR). Residues 613-633 (FFVILLLNIANTAVVVYGLEA) traverse the membrane as a helical segment. The Extracellular portion of the chain corresponds to 634 to 637 (HPKD). A helical membrane pass occupies residues 638-658 (FLSFLLIPFIGNLFIYIIYYI). Residues 659–671 (LMKMIYREKIPKR) lie on the Cytoplasmic side of the membrane. The chain crosses the membrane as a helical span at residues 672–692 (AIALLFAAVISWTCAGILFNQ). The Extracellular segment spans residues 693–728 (RVSDWSKMPAISRELNKPCIFLNFYDNHDLWHLSSA). The chain crosses the membrane as a helical span at residues 729–749 (FAIFFSFTAINVIDDDLMFVM). Topologically, residues 750–756 (RNTIRVF) are cytoplasmic.

This sequence belongs to the SID1 family. Highly expressed along the intestine with expression also detected in the pharynx, especially at the terminal bulb, and in the excretory gland cells.

The protein localises to the cell membrane. The catalysed reaction is cholesterol(in) = cholesterol(out). In terms of biological role, cholesterol-binding protein which is involved in dietary cholesterol uptake from the environment. Does not play a role in double-stranded RNA transport in contrast to other SID1 family members. This Caenorhabditis elegans protein is Cholesterol uptake protein 1.